The chain runs to 370 residues: GTPase Obg (370 aa).

Residues 1–159 (MKFIDEARIE…RMLKLELKVL (159 aa)) enclose the Obg domain. The disordered stretch occupies residues 128–147 (LHFKSSTNRAPRQKTDGKPG). In terms of domain architecture, OBG-type G spans 160 to 334 (ADVGLLGMPN…LCYAIYDYLS (175 aa)). Residues 166-173 (GMPNAGKS), 191-195 (FTTLA), 213-216 (DIPG), 284-287 (NKLD), and 315-317 (SAL) each bind GTP. The Mg(2+) site is built by Ser-173 and Thr-193.

Belongs to the TRAFAC class OBG-HflX-like GTPase superfamily. OBG GTPase family. Monomer. Mg(2+) is required as a cofactor.

The protein resides in the cytoplasm. In terms of biological role, an essential GTPase which binds GTP, GDP and possibly (p)ppGpp with moderate affinity, with high nucleotide exchange rates and a fairly low GTP hydrolysis rate. Plays a role in control of the cell cycle, stress response, ribosome biogenesis and in those bacteria that undergo differentiation, in morphogenesis control. The protein is GTPase Obg of Burkholderia orbicola (strain MC0-3).